The primary structure comprises 171 residues: MTKKVAIILANEFEDIEYSSPKEALENAGFNTVVIGDTANSEVVGKHGEKVTVDVGIAEAKPEDYDALLIPGGFSPDHLRGDTEGRYGTFAKYFTKNDVPTFAICHGPQILIDTDDLKGRTLTAVLNVRKDLSNAGAHVVDESVVVDNNIVTSRVPDDLDDFNREIVKQLQ.

The 169-residue stretch at 3–171 (KKVAIILANE…FNREIVKQLQ (169 aa)) folds into the PfpI endopeptidase domain.

This sequence belongs to the peptidase C56 family.

This is an uncharacterized protein from Staphylococcus aureus (strain COL).